Here is a 482-residue protein sequence, read N- to C-terminus: uncharacterized protein (482 aa).

2 WD repeats span residues 92-133 (DMPN…REPI) and 191-230 (GHEH…CLCK).

It localises to the cytoplasm. The protein localises to the nucleus. This is an uncharacterized protein from Schizosaccharomyces pombe (strain 972 / ATCC 24843) (Fission yeast).